Reading from the N-terminus, the 155-residue chain is Small ribosomal subunit protein uS9 (155 aa).

This sequence belongs to the universal ribosomal protein uS9 family.

This chain is Small ribosomal subunit protein uS9, found in Allorhizobium ampelinum (strain ATCC BAA-846 / DSM 112012 / S4) (Agrobacterium vitis (strain S4)).